The following is a 463-amino-acid chain: L-2-hydroxyglutarate dehydrogenase, mitochondrial (463 aa).

The transit peptide at 1 to 51 (MVPALRYLVGACGRARGLFAGGSPGACGFASGRPRPLCGGSRSASTSSFDI) directs the protein to the mitochondrion. N6-acetyllysine occurs at positions 104, 155, and 173.

It belongs to the L2HGDH family. The cofactor is FAD. As to expression, widely expressed. Highly expressed in brain, testis and muscle. Expressed to a lower extent in lymphocytes, fibroblasts, keratinocytes, placenta, bladder, small intestine, liver and bone marrow.

Its subcellular location is the mitochondrion. It catalyses the reaction (S)-2-hydroxyglutarate + A = 2-oxoglutarate + AH2. This Homo sapiens (Human) protein is L-2-hydroxyglutarate dehydrogenase, mitochondrial (L2HGDH).